The chain runs to 128 residues: Small ribosomal subunit protein bS6 (128 aa).

Belongs to the bacterial ribosomal protein bS6 family.

In terms of biological role, binds together with bS18 to 16S ribosomal RNA. In Thermotoga sp. (strain RQ2), this protein is Small ribosomal subunit protein bS6.